A 45-amino-acid chain; its full sequence is MFQLFRTKWFRSAPVVATIWITLTAGIIVEFNRFVPDLLFHPMSF.

The helical transmembrane segment at 9–29 threads the bilayer; sequence WFRSAPVVATIWITLTAGIIV.

This sequence belongs to the PsaJ family.

Its subcellular location is the cellular thylakoid membrane. May help in the organization of the PsaE and PsaF subunits. This Prochlorococcus marinus (strain NATL1A) protein is Photosystem I reaction center subunit IX 1.